Here is a 291-residue protein sequence, read N- to C-terminus: Homeobox protein knotted-1-like 7 (291 aa).

The ELK domain occupies 194–214 (ELKLELKQGFKSRIEDVREEI). Residues 215–278 (MRKRRAGKLP…NQRKRNWHNN (64 aa)) constitute a DNA-binding region (homeobox; TALE-type).

The protein belongs to the TALE/KNOX homeobox family. In terms of assembly, may form heterodimeric complex with the TALE/BELL proteins. Interacts with OFP1, OFP2, OFP3, OFP4 and OFP6.

It localises to the nucleus. May be involved in secondary cell wall biosynthesis. In Arabidopsis thaliana (Mouse-ear cress), this protein is Homeobox protein knotted-1-like 7 (KNAT7).